Consider the following 414-residue polypeptide: Histidine--tRNA ligase (414 aa).

Belongs to the class-II aminoacyl-tRNA synthetase family. In terms of assembly, homodimer.

The protein resides in the cytoplasm. The catalysed reaction is tRNA(His) + L-histidine + ATP = L-histidyl-tRNA(His) + AMP + diphosphate + H(+). In Mycoplasma genitalium (strain ATCC 33530 / DSM 19775 / NCTC 10195 / G37) (Mycoplasmoides genitalium), this protein is Histidine--tRNA ligase (hisS).